The chain runs to 21 residues: ALCNCNRIIIPHMCWKKCGKK.

Disulfide bonds link Cys-3/Cys-14 and Cys-5/Cys-18.

In terms of processing, oxidation of Met-13 results in the loss of biological activity. An amidation at Lys-21 is suggested in Ref.1. Expressed by the venom gland.

It is found in the secreted. Functionally, presynaptic neurotoxin that blocks the inwardly rectifying Kir1.1/KCNJ1 and Kir3.1/3.4 (KCNJ3/KCNJ5) potassium channels with high affinity by binding to the M1-M2 linker region of these channels in a 1:1 stoichiometry. It may block the potassium channel pore by occluding its alpha helix into the channel vestibule. Tertiapin-Q also inhibits calcium-activated large conductance BK-type (KCNMA) potassium channels in a concentration-, and voltage-dependent manner, in addition to inhibiting Kir3.1/3.2 (KCNJ3/KCNJ6) heteromultimers potassium channels. It can prevent dose-dependently acetylcholine(ACh)-induced atrioventricular blocks in mammalian hearts, as KCNJ3/KCNJ5 channels (also named I(KACh), because these channels are activated by ACh) are found in mammalian myocytes. Interacts specifically with calmodulin in the presence of calcium. This Apis mellifera (Honeybee) protein is Tertiapin.